A 303-amino-acid polypeptide reads, in one-letter code: Glycine--tRNA ligase alpha subunit (303 aa).

Belongs to the class-II aminoacyl-tRNA synthetase family. As to quaternary structure, tetramer of two alpha and two beta subunits.

It localises to the cytoplasm. It catalyses the reaction tRNA(Gly) + glycine + ATP = glycyl-tRNA(Gly) + AMP + diphosphate. The protein is Glycine--tRNA ligase alpha subunit of Stenotrophomonas maltophilia (strain K279a).